Consider the following 1312-residue polypeptide: DNA repair protein RAD50 (1312 aa).

ATP-binding residues include Arg13, Asn38, Gly39, Gly41, Lys42, Thr43, Thr44, Val67, Asp69, and Gln159. Thr43 is a binding site for Mg(2+). Residue Gln159 participates in Mg(2+) binding. Coiled coils occupy residues 228–359 (TSKE…QADR), 401–598 (RERQ…AKLN), and 635–673 (SQDFESDLDRLKEEIEKSSKQRAMLAGATAVYSQFITQL). Ser635 carries the post-translational modification Phosphoserine; by ATM. The Zinc-hook domain maps to 635–734 (SQDFESDLDR…RRDEMLGLVP (100 aa)). Zn(2+) contacts are provided by Cys681 and Cys684. Thr690 is subject to Phosphothreonine. 2 coiled-coil regions span residues 706–734 (RLAPDKLKSTESELKKKEKRRDEMLGLVP) and 789–1079 (LTDV…GRQK). At Lys959 the chain carries N6-acetyllysine.

The protein belongs to the SMC family. RAD50 subfamily. As to quaternary structure, component of the MRN complex composed of two heterodimers RAD50 and MRE11 associated with a single NBN. The MRN complexes dimerize on DNA to form joined MRN-MRN oligomers required for DNA double-strand break repair. As part of the MRN complex, interacts with MCM8 and MCM9; the interaction recruits the complex to DNA repair sites. Component of the BASC complex, at least composed of BRCA1, MSH2, MSH6, MLH1, ATM, BLM, RAD50, MRE11 and NBN. Found in a complex with TERF2. Interacts with RINT1. Interacts with BRCA1 via its N-terminal domain. Interacts with DCLRE1C/Artemis. Interacts with MRNIP. Interacts with CYREN (via XLF motif). Interacts with C1QBP and MRE11; interaction takes place in absence of DNA damage to form the MRC (MRE11-RAD50-C1QBP) complex that inhibits the activity of MRE11. (Microbial infection) Interacts with herpes simplex virus 1 protein UL12. Requires Zn(2+) as cofactor. Phosphorylation at Ser-635 by ATM in response to DNA damage is required for double-strand break (DSB) repair. Expressed at very low level in most tissues, except in testis where it is expressed at higher level. Expressed in fibroblasts.

Its subcellular location is the nucleus. The protein resides in the chromosome. The protein localises to the telomere. It catalyses the reaction ATP + H2O = ADP + phosphate + H(+). In terms of biological role, component of the MRN complex, which plays a central role in double-strand break (DSB) repair, DNA recombination, maintenance of telomere integrity and meiosis. The MRN complex is involved in the repair of DNA double-strand breaks (DSBs) via homologous recombination (HR), an error-free mechanism which primarily occurs during S and G2 phases. The complex (1) mediates the end resection of damaged DNA, which generates proper single-stranded DNA, a key initial steps in HR, and is (2) required for the recruitment of other repair factors and efficient activation of ATM and ATR upon DNA damage. The MRN complex possesses single-strand endonuclease activity and double-strand-specific 3'-5' exonuclease activity, which are provided by MRE11, to initiate end resection, which is required for single-strand invasion and recombination. Within the complex, RAD50 is both required to bind DNA ends and hold them in close proximity and regulate the activity of MRE11. RAD50 provides an ATP-dependent control of MRE11 by positioning DNA ends into the MRE11 active site: ATP-binding induces a large structural change from an open form with accessible MRE11 nuclease sites into a closed form. The MRN complex is also required for DNA damage signaling via activation of the ATM and ATR kinases: the nuclease activity of MRE11 is not required to activate ATM and ATR. The MRN complex is also required for the processing of R-loops. In telomeres the MRN complex may modulate t-loop formation. This is DNA repair protein RAD50 from Homo sapiens (Human).